The following is a 404-amino-acid chain: Riboflavin biosynthesis protein RibBA (404 aa).

The tract at residues 1–204 (MEELKLNTIE…IRDLIAYRLK (204 aa)) is DHBP synthase. D-ribulose 5-phosphate-binding positions include 30 to 31 (RE), aspartate 35, 143 to 147 (RAGHT), and glutamate 167. Position 31 (glutamate 31) interacts with Mg(2+). Residue histidine 146 coordinates Mg(2+). Positions 205-404 (QESLVEKGVE…RMGHTLHFNK (200 aa)) are GTP cyclohydrolase II. A GTP-binding site is contributed by 255–259 (RVHSS). Zn(2+) is bound by residues cysteine 260, cysteine 271, and cysteine 273. GTP-binding positions include glutamine 276, 298 to 300 (EGR), and threonine 320. Residue aspartate 332 is the Proton acceptor; for GTP cyclohydrolase activity of the active site. Residue arginine 334 is the Nucleophile; for GTP cyclohydrolase activity of the active site. Threonine 355 and lysine 360 together coordinate GTP.

It in the N-terminal section; belongs to the DHBP synthase family. The protein in the C-terminal section; belongs to the GTP cyclohydrolase II family. The cofactor is Mg(2+). Mn(2+) serves as cofactor. Zn(2+) is required as a cofactor.

It catalyses the reaction D-ribulose 5-phosphate = (2S)-2-hydroxy-3-oxobutyl phosphate + formate + H(+). The catalysed reaction is GTP + 4 H2O = 2,5-diamino-6-hydroxy-4-(5-phosphoribosylamino)-pyrimidine + formate + 2 phosphate + 3 H(+). It participates in cofactor biosynthesis; riboflavin biosynthesis; 2-hydroxy-3-oxobutyl phosphate from D-ribulose 5-phosphate: step 1/1. It functions in the pathway cofactor biosynthesis; riboflavin biosynthesis; 5-amino-6-(D-ribitylamino)uracil from GTP: step 1/4. Catalyzes the conversion of D-ribulose 5-phosphate to formate and 3,4-dihydroxy-2-butanone 4-phosphate. Its function is as follows. Catalyzes the conversion of GTP to 2,5-diamino-6-ribosylamino-4(3H)-pyrimidinone 5'-phosphate (DARP), formate and pyrophosphate. This is Riboflavin biosynthesis protein RibBA from Phocaeicola vulgatus (strain ATCC 8482 / DSM 1447 / JCM 5826 / CCUG 4940 / NBRC 14291 / NCTC 11154) (Bacteroides vulgatus).